Reading from the N-terminus, the 184-residue chain is ATP synthase subunit b, chloroplastic (184 aa).

The chain crosses the membrane as a helical span at residues 27 to 49 (LATNPINLSVVFGVLIFFGKGVL).

The protein belongs to the ATPase B chain family. F-type ATPases have 2 components, F(1) - the catalytic core - and F(0) - the membrane proton channel. F(1) has five subunits: alpha(3), beta(3), gamma(1), delta(1), epsilon(1). F(0) has four main subunits: a(1), b(1), b'(1) and c(10-14). The alpha and beta chains form an alternating ring which encloses part of the gamma chain. F(1) is attached to F(0) by a central stalk formed by the gamma and epsilon chains, while a peripheral stalk is formed by the delta, b and b' chains.

The protein resides in the plastid. Its subcellular location is the chloroplast thylakoid membrane. In terms of biological role, f(1)F(0) ATP synthase produces ATP from ADP in the presence of a proton or sodium gradient. F-type ATPases consist of two structural domains, F(1) containing the extramembraneous catalytic core and F(0) containing the membrane proton channel, linked together by a central stalk and a peripheral stalk. During catalysis, ATP synthesis in the catalytic domain of F(1) is coupled via a rotary mechanism of the central stalk subunits to proton translocation. Its function is as follows. Component of the F(0) channel, it forms part of the peripheral stalk, linking F(1) to F(0). This chain is ATP synthase subunit b, chloroplastic, found in Olimarabidopsis pumila (Dwarf rocket).